Consider the following 1056-residue polypeptide: Carbamoyl phosphate synthase large chain (1056 aa).

Positions 1–401 (MPKRTDIHKI…ALHKAVRSLE (401 aa)) are carboxyphosphate synthetic domain. The ATP site is built by arginine 129, arginine 169, glycine 175, glycine 176, lysine 208, isoleucine 210, glutamate 215, glycine 241, isoleucine 242, histidine 243, glutamine 284, and glutamate 298. An ATP-grasp 1 domain is found at 133 to 327 (KELMNELGEP…IAKMAAKIAV (195 aa)). 3 residues coordinate Mg(2+): glutamine 284, glutamate 298, and asparagine 300. Residues glutamine 284, glutamate 298, and asparagine 300 each contribute to the Mn(2+) site. Residues 402 to 546 (IDEKDLFSAE…YSAYDHENES (145 aa)) are oligomerization domain. The interval 547-929 (QRTKKPSILV…ALHKAFSGAH (383 aa)) is carbamoyl phosphate synthetic domain. The ATP-grasp 2 domain maps to 671-861 (DQVITDLNLK…MAQVATRVIL (191 aa)). Arginine 707, alanine 746, leucine 748, glutamate 752, glycine 777, valine 778, histidine 779, serine 780, glutamine 820, and glutamate 832 together coordinate ATP. The Mg(2+) site is built by glutamine 820, glutamate 832, and asparagine 834. Mn(2+) is bound by residues glutamine 820, glutamate 832, and asparagine 834. The MGS-like domain occupies 930–1056 (IQVPNDGKIL…DQSLEAITIK (127 aa)). Residues 930–1056 (IQVPNDGKIL…DQSLEAITIK (127 aa)) form an allosteric domain region.

The protein belongs to the CarB family. As to quaternary structure, composed of two chains; the small (or glutamine) chain promotes the hydrolysis of glutamine to ammonia, which is used by the large (or ammonia) chain to synthesize carbamoyl phosphate. Tetramer of heterodimers (alpha,beta)4. Mg(2+) is required as a cofactor. Mn(2+) serves as cofactor.

The enzyme catalyses hydrogencarbonate + L-glutamine + 2 ATP + H2O = carbamoyl phosphate + L-glutamate + 2 ADP + phosphate + 2 H(+). It catalyses the reaction hydrogencarbonate + NH4(+) + 2 ATP = carbamoyl phosphate + 2 ADP + phosphate + 2 H(+). Its pathway is amino-acid biosynthesis; L-arginine biosynthesis; carbamoyl phosphate from bicarbonate: step 1/1. It functions in the pathway pyrimidine metabolism; UMP biosynthesis via de novo pathway; (S)-dihydroorotate from bicarbonate: step 1/3. Its function is as follows. Large subunit of the glutamine-dependent carbamoyl phosphate synthetase (CPSase). CPSase catalyzes the formation of carbamoyl phosphate from the ammonia moiety of glutamine, carbonate, and phosphate donated by ATP, constituting the first step of 2 biosynthetic pathways, one leading to arginine and/or urea and the other to pyrimidine nucleotides. The large subunit (synthetase) binds the substrates ammonia (free or transferred from glutamine from the small subunit), hydrogencarbonate and ATP and carries out an ATP-coupled ligase reaction, activating hydrogencarbonate by forming carboxy phosphate which reacts with ammonia to form carbamoyl phosphate. The polypeptide is Carbamoyl phosphate synthase large chain (Limosilactobacillus reuteri (strain DSM 20016) (Lactobacillus reuteri)).